Consider the following 216-residue polypeptide: Redox-sensing transcriptional repressor Rex 1 (216 aa).

The segment at residues 16-55 (LYYRYLRMLHDTGKNKVSSTELSEAVQVDSATIRRDFSYF) is a DNA-binding region (H-T-H motif). 90 to 95 (GVGNLG) is an NAD(+) binding site.

This sequence belongs to the transcriptional regulatory Rex family. Homodimer.

It localises to the cytoplasm. Modulates transcription in response to changes in cellular NADH/NAD(+) redox state. This is Redox-sensing transcriptional repressor Rex 1 from Enterococcus faecalis (strain ATCC 700802 / V583).